Here is a 308-residue protein sequence, read N- to C-terminus: Cap-specific mRNA (nucleoside-2'-O-)-methyltransferase (308 aa).

Tyr-30 serves as a coordination point for mRNA. 8 residues coordinate S-adenosyl-L-methionine: Gln-46, Tyr-74, Gly-76, Gly-80, Asp-103, Arg-105, Val-124, and Asp-147. Positions 177-257 (PIASSLKWRC…NTKIRPKIVL (81 aa)) are binding to NPH-I. Lys-183 (for methyltransferase activity) is an active-site residue. MRNA-binding positions include 185–188 (RCPF), Asp-190, 213–215 (SAE), and Glu-241.

The protein belongs to the class I-like SAM-binding methyltransferase superfamily. Poxvirus/kinetoplastid 2'-O-MTase family. As to quaternary structure, interacts with poly(A) polymerase catalytic subunit OPG063. Interacts with OPG109 and OPG123; these interactions might help linking transcription to capping and polyadenylation.

The protein resides in the virion. The enzyme catalyses a 5'-end (N(7)-methyl 5'-triphosphoguanosine)-ribonucleoside in mRNA + S-adenosyl-L-methionine = a 5'-end (N(7)-methyl 5'-triphosphoguanosine)-(2'-O-methyl-ribonucleoside) in mRNA + S-adenosyl-L-homocysteine + H(+). In terms of biological role, displays methyltransferase, positive regulation of the poly(A) polymerase and transcription elongation activities. Involved in the modification of both mRNA ends and in intermediate and late gene positive transcription elongation. At the mRNAs 5' end, methylates the ribose 2' OH group of the first transcribed nucleotide, thereby producing a 2'-O-methylpurine cap. At the 3' end, functions as a processivity factor which stimulates the activity of the viral poly(A) polymerase OPG063 that creates mRNA's poly(A) tail. In the presence of OPG102, OPG063 does not dissociate from the RNA allowing tail elongation to around 250 adenylates. This is Cap-specific mRNA (nucleoside-2'-O-)-methyltransferase (OPG102) from Fowlpox virus (strain NVSL) (FPV).